The chain runs to 486 residues: Galactose-1-phosphate uridylyltransferase (486 aa).

The protein belongs to the galactose-1-phosphate uridylyltransferase type 2 family.

The protein resides in the cytoplasm. The catalysed reaction is alpha-D-galactose 1-phosphate + UDP-alpha-D-glucose = alpha-D-glucose 1-phosphate + UDP-alpha-D-galactose. It functions in the pathway carbohydrate metabolism; galactose metabolism. This chain is Galactose-1-phosphate uridylyltransferase, found in Pediococcus pentosaceus (strain ATCC 25745 / CCUG 21536 / LMG 10740 / 183-1w).